A 365-amino-acid chain; its full sequence is tRNA N6-adenosine threonylcarbamoyltransferase (365 aa).

The Fe cation site is built by histidine 119 and histidine 123. Substrate-binding positions include 141–145, aspartate 174, glycine 187, and asparagine 288; that span reads LVSGG. Position 316 (aspartate 316) interacts with Fe cation.

It belongs to the KAE1 / TsaD family. Fe(2+) serves as cofactor.

The protein localises to the cytoplasm. The catalysed reaction is L-threonylcarbamoyladenylate + adenosine(37) in tRNA = N(6)-L-threonylcarbamoyladenosine(37) in tRNA + AMP + H(+). Required for the formation of a threonylcarbamoyl group on adenosine at position 37 (t(6)A37) in tRNAs that read codons beginning with adenine. Is involved in the transfer of the threonylcarbamoyl moiety of threonylcarbamoyl-AMP (TC-AMP) to the N6 group of A37, together with TsaE and TsaB. TsaD likely plays a direct catalytic role in this reaction. This Rhizobium leguminosarum bv. trifolii (strain WSM2304) protein is tRNA N6-adenosine threonylcarbamoyltransferase.